Consider the following 709-residue polypeptide: Elongation factor G (709 aa).

One can recognise a tr-type G domain in the interval 9–296 (AKVRNIGIMA…AVVRYLPSPL (288 aa)). GTP is bound by residues 18 to 25 (AHIDAGKT), 86 to 90 (DTPGH), and 140 to 143 (NKLD).

Belongs to the TRAFAC class translation factor GTPase superfamily. Classic translation factor GTPase family. EF-G/EF-2 subfamily.

It localises to the cytoplasm. Its function is as follows. Catalyzes the GTP-dependent ribosomal translocation step during translation elongation. During this step, the ribosome changes from the pre-translocational (PRE) to the post-translocational (POST) state as the newly formed A-site-bound peptidyl-tRNA and P-site-bound deacylated tRNA move to the P and E sites, respectively. Catalyzes the coordinated movement of the two tRNA molecules, the mRNA and conformational changes in the ribosome. The chain is Elongation factor G from Streptomyces griseus subsp. griseus (strain JCM 4626 / CBS 651.72 / NBRC 13350 / KCC S-0626 / ISP 5235).